Consider the following 359-residue polypeptide: Nicotinate-nucleotide--dimethylbenzimidazole phosphoribosyltransferase (359 aa).

E318 functions as the Proton acceptor in the catalytic mechanism.

Belongs to the CobT family. As to quaternary structure, homodimer.

The catalysed reaction is 5,6-dimethylbenzimidazole + nicotinate beta-D-ribonucleotide = alpha-ribazole 5'-phosphate + nicotinate + H(+). Its pathway is nucleoside biosynthesis; alpha-ribazole biosynthesis; alpha-ribazole from 5,6-dimethylbenzimidazole: step 1/2. Catalyzes the synthesis of alpha-ribazole-5'-phosphate from nicotinate mononucleotide (NAMN) and 5,6-dimethylbenzimidazole (DMB). The sequence is that of Nicotinate-nucleotide--dimethylbenzimidazole phosphoribosyltransferase from Escherichia coli (strain SMS-3-5 / SECEC).